The sequence spans 362 residues: Serine/threonine-protein kinase SRK2D (362 aa).

Residues 23 to 279 (YDFVKDIGSG…IPEITSDKWF (257 aa)) form the Protein kinase domain. ATP contacts are provided by residues 29–37 (IGSGNFGVA) and lysine 52. The Proton acceptor role is filled by aspartate 142.

Belongs to the protein kinase superfamily. Ser/Thr protein kinase family. In terms of assembly, interacts with ABI1. Interacts with I-2, TOPP1 and TOPP2. Interacts with FREE1 (via C-terminus). As to expression, expressed in seeds, seedlings, roots (especially in tips), stems, leaves, shoots, flowers and siliques.

It catalyses the reaction L-seryl-[protein] + ATP = O-phospho-L-seryl-[protein] + ADP + H(+). The catalysed reaction is L-threonyl-[protein] + ATP = O-phospho-L-threonyl-[protein] + ADP + H(+). Functionally, together with SRK2I, key component and activator of the abscisic acid (ABA) signaling pathway that regulates numerous ABA responses, such as seed germination, Pro accumulation, root growth inhibition, dormancy and seedling growth, and, to a lesser extent, stomatal closure. In response to ABA, phosphorylates the ESCRT-I complex component FREE1, which is required for ABA-induced FREE1 nuclear import. The protein is Serine/threonine-protein kinase SRK2D (SRK2D) of Arabidopsis thaliana (Mouse-ear cress).